The sequence spans 640 residues: Ribonuclease J (640 aa).

Positions 75, 77, 79, 80, 145, and 167 each coordinate Zn(2+). 368–372 (HVSGH) is a substrate binding site. Residue H394 coordinates Zn(2+). The segment at 578 to 640 (TVSATSATPA…RKRSTTSVSS (63 aa)) is disordered. Basic and acidic residues predominate over residues 598-610 (PEPKVKAKPEKKV).

The protein belongs to the metallo-beta-lactamase superfamily. RNA-metabolizing metallo-beta-lactamase-like family. Bacterial RNase J subfamily. Homodimer, may be a subunit of the RNA degradosome. Zn(2+) is required as a cofactor.

It is found in the cytoplasm. An RNase that has 5'-3' exonuclease and possibly endoonuclease activity. Involved in maturation of rRNA and in some organisms also mRNA maturation and/or decay. This is Ribonuclease J from Synechocystis sp. (strain ATCC 27184 / PCC 6803 / Kazusa).